Consider the following 288-residue polypeptide: UTP--glucose-1-phosphate uridylyltransferase (288 aa).

It belongs to the UDPGP type 2 family.

It carries out the reaction alpha-D-glucose 1-phosphate + UTP + H(+) = UDP-alpha-D-glucose + diphosphate. The protein operates within glycolipid metabolism; diglucosyl-diacylglycerol biosynthesis. Catalyzes the formation of UDP-glucose from glucose-1-phosphate and UTP. This is an intermediate step in the biosynthesis of diglucosyl-diacylglycerol (Glc2-DAG), i.e. the predominant glycolipid found in the S.aureus membrane, which is also used as a membrane anchor for lipoteichoic acid (LTA). The polypeptide is UTP--glucose-1-phosphate uridylyltransferase (gtaB) (Staphylococcus aureus (strain MRSA252)).